Consider the following 266-residue polypeptide: 2-C-methyl-D-erythritol 4-phosphate cytidylyltransferase (266 aa).

Residues 234-251 show a composition bias toward basic and acidic residues; sequence ADDARSAEARSAEARSEE. The disordered stretch occupies residues 234-266; it reads ADDARSAEARSAEARSEEPQFAGARSTDARSGG.

It belongs to the IspD/TarI cytidylyltransferase family. IspD subfamily.

The catalysed reaction is 2-C-methyl-D-erythritol 4-phosphate + CTP + H(+) = 4-CDP-2-C-methyl-D-erythritol + diphosphate. The protein operates within isoprenoid biosynthesis; isopentenyl diphosphate biosynthesis via DXP pathway; isopentenyl diphosphate from 1-deoxy-D-xylulose 5-phosphate: step 2/6. Catalyzes the formation of 4-diphosphocytidyl-2-C-methyl-D-erythritol from CTP and 2-C-methyl-D-erythritol 4-phosphate (MEP). In Frankia casuarinae (strain DSM 45818 / CECT 9043 / HFP020203 / CcI3), this protein is 2-C-methyl-D-erythritol 4-phosphate cytidylyltransferase.